Here is a 467-residue protein sequence, read N- to C-terminus: ATP synthase subunit beta (467 aa).

An ATP-binding site is contributed by 152 to 159 (GGAGVGKT).

It belongs to the ATPase alpha/beta chains family. In terms of assembly, F-type ATPases have 2 components, CF(1) - the catalytic core - and CF(0) - the membrane proton channel. CF(1) has five subunits: alpha(3), beta(3), gamma(1), delta(1), epsilon(1). CF(0) has three main subunits: a(1), b(2) and c(9-12). The alpha and beta chains form an alternating ring which encloses part of the gamma chain. CF(1) is attached to CF(0) by a central stalk formed by the gamma and epsilon chains, while a peripheral stalk is formed by the delta and b chains.

It localises to the cell membrane. It carries out the reaction ATP + H2O + 4 H(+)(in) = ADP + phosphate + 5 H(+)(out). Its function is as follows. Produces ATP from ADP in the presence of a proton gradient across the membrane. The catalytic sites are hosted primarily by the beta subunits. The protein is ATP synthase subunit beta of Caldicellulosiruptor bescii (strain ATCC BAA-1888 / DSM 6725 / KCTC 15123 / Z-1320) (Anaerocellum thermophilum).